The chain runs to 88 residues: Acyl-CoA-binding domain-containing protein 7 (88 aa).

The 86-residue stretch at 3 to 88 (LQADFDKAAK…AKELIEKYGI (86 aa)) folds into the ACB domain. Residues Arg-15, 30 to 34 (YGLYK), Lys-56, and Tyr-75 contribute to the an acyl-CoA site.

The protein belongs to the ACBD7 family.

Its function is as follows. Binds medium- and long-chain acyl-CoA esters. The protein is Acyl-CoA-binding domain-containing protein 7 (ACBD7) of Bos taurus (Bovine).